The primary structure comprises 394 residues: Tubulin-like protein CetZ5 (394 aa).

GTP contacts are provided by residues 10–14, 110–112, Glu-142, Asn-169, and Asn-187; these read QAGGN and GTG.

This sequence belongs to the CetZ family.

Its subcellular location is the cytoplasm. Its function is as follows. Involved in cell shape control. This Haloferax volcanii (strain ATCC 29605 / DSM 3757 / JCM 8879 / NBRC 14742 / NCIMB 2012 / VKM B-1768 / DS2) (Halobacterium volcanii) protein is Tubulin-like protein CetZ5.